The primary structure comprises 125 residues: Small ribosomal subunit protein uS13 (125 aa).

Belongs to the universal ribosomal protein uS13 family. Part of the 30S ribosomal subunit. Forms a loose heterodimer with protein S19. Forms two bridges to the 50S subunit in the 70S ribosome.

Its function is as follows. Located at the top of the head of the 30S subunit, it contacts several helices of the 16S rRNA. In the 70S ribosome it contacts the 23S rRNA (bridge B1a) and protein L5 of the 50S subunit (bridge B1b), connecting the 2 subunits; these bridges are implicated in subunit movement. Contacts the tRNAs in the A and P-sites. The polypeptide is Small ribosomal subunit protein uS13 (Orientia tsutsugamushi (strain Ikeda) (Rickettsia tsutsugamushi)).